Reading from the N-terminus, the 447-residue chain is MIKIYDTMTRSLQDFIPLNEGKVNMYVCGPTVYNYIHIGNARSVVAFDTIRRYFEYCGYQVNYISNFTDVDDKIIKGAAEAGMDTKSFSDKFISAFMEDVAALGVKPATKNPRVIDYMDEIIDFVKVLVDKEFAYEANGDVYFRVSKSHHYAKLANKTLEDLEIGASGRVDGEGEIKENPLDFALWKSAKSGEVSWESPWGKGRPGWHIECSVMATEILGDTIDIHGGGADLEFPHHTNEIAQSEAKTGKTFANYWMHNGFVNVDNEKMSKSLGNFITVHDMLKSVDGQVIRFFLATQQYRKPVNFTEKAVHDAEVNLKYLKNTFNLPIQENANDEELEQFVKAFQGAMDDDFNTANGITVIFEMAKWINSGHYTSRVKETFAELLEIFGIVFQEEVLDADIESLIEQRQEARANRDFATADRIRDELAKQGIKLLDTKDGVRWTRD.

Residue Cys-28 coordinates Zn(2+). The 'HIGH' region motif lies at 30–40 (PTVYNYIHIGN). 3 residues coordinate Zn(2+): Cys-211, His-236, and Glu-240. Positions 268 to 272 (KMSKS) match the 'KMSKS' region motif. Residue Lys-271 coordinates ATP.

Belongs to the class-I aminoacyl-tRNA synthetase family. As to quaternary structure, monomer. Zn(2+) serves as cofactor.

It localises to the cytoplasm. It carries out the reaction tRNA(Cys) + L-cysteine + ATP = L-cysteinyl-tRNA(Cys) + AMP + diphosphate. This Streptococcus agalactiae serotype V (strain ATCC BAA-611 / 2603 V/R) protein is Cysteine--tRNA ligase.